The sequence spans 490 residues: Phosphoglucosamine mutase (490 aa).

Ser-139 functions as the Phosphoserine intermediate in the catalytic mechanism. Ser-139, Asp-279, Asp-281, and Asp-283 together coordinate Mg(2+). Ser-139 carries the phosphoserine modification.

The protein belongs to the phosphohexose mutase family. Requires Mg(2+) as cofactor. Post-translationally, activated by phosphorylation.

It catalyses the reaction alpha-D-glucosamine 1-phosphate = D-glucosamine 6-phosphate. Its function is as follows. Catalyzes the conversion of glucosamine-6-phosphate to glucosamine-1-phosphate. The polypeptide is Phosphoglucosamine mutase (Trichormus variabilis (strain ATCC 29413 / PCC 7937) (Anabaena variabilis)).